The primary structure comprises 218 residues: Thiamine-phosphate synthase (218 aa).

4-amino-2-methyl-5-(diphosphooxymethyl)pyrimidine contacts are provided by residues 43–47 and Asn75; that span reads QLRMK. Residues Asp76 and Asp95 each coordinate Mg(2+). Thr114 serves as a coordination point for 4-amino-2-methyl-5-(diphosphooxymethyl)pyrimidine. 140-142 is a binding site for 2-[(2R,5Z)-2-carboxy-4-methylthiazol-5(2H)-ylidene]ethyl phosphate; the sequence is TST. 4-amino-2-methyl-5-(diphosphooxymethyl)pyrimidine is bound at residue Lys143. Residues Gly171 and 191–192 each bind 2-[(2R,5Z)-2-carboxy-4-methylthiazol-5(2H)-ylidene]ethyl phosphate; that span reads VS.

It belongs to the thiamine-phosphate synthase family. Mg(2+) is required as a cofactor.

It carries out the reaction 2-[(2R,5Z)-2-carboxy-4-methylthiazol-5(2H)-ylidene]ethyl phosphate + 4-amino-2-methyl-5-(diphosphooxymethyl)pyrimidine + 2 H(+) = thiamine phosphate + CO2 + diphosphate. The catalysed reaction is 2-(2-carboxy-4-methylthiazol-5-yl)ethyl phosphate + 4-amino-2-methyl-5-(diphosphooxymethyl)pyrimidine + 2 H(+) = thiamine phosphate + CO2 + diphosphate. It catalyses the reaction 4-methyl-5-(2-phosphooxyethyl)-thiazole + 4-amino-2-methyl-5-(diphosphooxymethyl)pyrimidine + H(+) = thiamine phosphate + diphosphate. The protein operates within cofactor biosynthesis; thiamine diphosphate biosynthesis; thiamine phosphate from 4-amino-2-methyl-5-diphosphomethylpyrimidine and 4-methyl-5-(2-phosphoethyl)-thiazole: step 1/1. Condenses 4-methyl-5-(beta-hydroxyethyl)thiazole monophosphate (THZ-P) and 2-methyl-4-amino-5-hydroxymethyl pyrimidine pyrophosphate (HMP-PP) to form thiamine monophosphate (TMP). The protein is Thiamine-phosphate synthase of Myxococcus xanthus (strain DK1622).